Reading from the N-terminus, the 409-residue chain is N-acetylglucosamine-6-phosphate deacetylase (409 aa).

A divalent metal cation is bound at residue E143. 154-155 (AH) contributes to the substrate binding site. A divalent metal cation-binding residues include H211 and H232. Substrate is bound by residues 235–236 (NA), R243, and 269–272 (DGTH). Catalysis depends on D294, which acts as the Proton donor/acceptor. Residue 328 to 330 (LSG) coordinates substrate.

It belongs to the metallo-dependent hydrolases superfamily. NagA family. A divalent metal cation serves as cofactor.

The catalysed reaction is N-acetyl-D-glucosamine 6-phosphate + H2O = D-glucosamine 6-phosphate + acetate. Its pathway is amino-sugar metabolism; N-acetylneuraminate degradation. In terms of biological role, hydrolyzes the N-glycolyl group from N-glycolylglucosamine 6-phosphate (GlcNGc-6-P) in the N-glycolylneuraminic acid (Neu5Gc) degradation pathway. Although human is not able to catalyze formation of Neu5Gc due to the inactive CMAHP enzyme, Neu5Gc is present in food and must be degraded. The polypeptide is N-acetylglucosamine-6-phosphate deacetylase (AMDHD2) (Homo sapiens (Human)).